The primary structure comprises 352 residues: tRNA (guanine(26)-N(2))-dimethyltransferase (352 aa).

The 347-residue stretch at 4–350 folds into the Trm1 methyltransferase domain; sequence ILNKEGAVEF…ANYDEIARIL (347 aa). Residues Arg-39, Arg-65, Asp-83, Asp-109, and Ala-110 each contribute to the S-adenosyl-L-methionine site.

Belongs to the class I-like SAM-binding methyltransferase superfamily. Trm1 family.

The enzyme catalyses guanosine(26) in tRNA + 2 S-adenosyl-L-methionine = N(2)-dimethylguanosine(26) in tRNA + 2 S-adenosyl-L-homocysteine + 2 H(+). In terms of biological role, dimethylates a single guanine residue at position 26 of a number of tRNAs using S-adenosyl-L-methionine as donor of the methyl groups. This Pyrobaculum islandicum (strain DSM 4184 / JCM 9189 / GEO3) protein is tRNA (guanine(26)-N(2))-dimethyltransferase.